We begin with the raw amino-acid sequence, 183 residues long: Small ribosomal subunit protein uS4c (183 aa).

One can recognise an S4 RNA-binding domain in the interval 82 to 143 (MRLDNILFRL…KQRSKALIQN (62 aa)).

This sequence belongs to the universal ribosomal protein uS4 family. Part of the 30S ribosomal subunit. Contacts protein S5. The interaction surface between S4 and S5 is involved in control of translational fidelity.

The protein localises to the plastid. The protein resides in the chloroplast. Functionally, one of the primary rRNA binding proteins, it binds directly to 16S rRNA where it nucleates assembly of the body of the 30S subunit. With S5 and S12 plays an important role in translational accuracy. This chain is Small ribosomal subunit protein uS4c (rps4), found in Sparaxis sp. (strain Lejeune 1997).